Consider the following 307-residue polypeptide: MTKTIGLLVMAYGTPYKESDIEPYYTDIRRGKKPTEEELQDLKDRYEFIGGLSPLAGTTDRQAEALLEALNKEQDDVNFKLYLGLKHISPYIEEAVEQMHNDGIKEAVTVVLAPHYSSFSVGSYDQRAQEKADEYGIQLTHIKHYYQQPKFIKYWTEKINETLEQIPNQEHDETVLVVSAHSLPKGLIERNNDPYPHELHETAEILKQESNIIHVAEGWQSEGNTGTPWLGPDVQDLTRDLYKEHQFKHFIYTPVGFVCEHLEVLYDNDYECKVVCDDIGVNYYRPEMPNTHPLFIGAIVDEIQSHI.

Fe-coproporphyrin III-binding positions include Tyr-12, Arg-29, 45–46, Ser-53, and Tyr-124; that span reads RY. The Fe(2+) site is built by His-181 and Glu-263.

This sequence belongs to the ferrochelatase family.

The protein localises to the cytoplasm. It catalyses the reaction Fe-coproporphyrin III + 2 H(+) = coproporphyrin III + Fe(2+). It participates in porphyrin-containing compound metabolism; protoheme biosynthesis. Involved in coproporphyrin-dependent heme b biosynthesis. Catalyzes the insertion of ferrous iron into coproporphyrin III to form Fe-coproporphyrin III. The chain is Coproporphyrin III ferrochelatase from Staphylococcus epidermidis (strain ATCC 35984 / DSM 28319 / BCRC 17069 / CCUG 31568 / BM 3577 / RP62A).